We begin with the raw amino-acid sequence, 1274 residues long: Regulator of telomere elongation helicase 1 (1274 aa).

One can recognise a Helicase ATP-binding domain in the interval 7–296; that stretch reads NGVTVDFPFQ…ARVAQHGELQ (290 aa). 42–49 lines the ATP pocket; the sequence is SPTGTGKT. The [4Fe-4S] cluster site is built by cysteine 145, cysteine 163, cysteine 172, and cysteine 207. Residues 151–167 carry the Nuclear localization signal motif; the sequence is KKQESNHMQISLCRKKV. Positions 250–253 match the DEAH box motif; it reads DEAH. The Nuclear localization signal signature appears at 871–877; the sequence is QRGGKKK. Disordered stretches follow at residues 982-1002, 1014-1038, and 1143-1198; these read NSLP…RREL, RQLD…SKGD, and ELPC…DDTI. Residues 1186–1196 are compositionally biased toward basic and acidic residues; sequence QRPDQSARSDD.

The protein belongs to the helicase family. RAD3/XPD subfamily. In terms of assembly, interacts with TERF1. Interacts (via PIP-box) with PCNA; the interaction is direct and essential for suppressing telomere fragility. Interacts with MMS19; the interaction mediates the association of RTEL1 with the cytosolic iron-sulfur protein assembly (CIA) complex.

It localises to the nucleus. It catalyses the reaction ATP + H2O = ADP + phosphate + H(+). Functionally, a probable ATP-dependent DNA helicase implicated in telomere-length regulation, DNA repair and the maintenance of genomic stability. Acts as an anti-recombinase to counteract toxic recombination and limit crossover during meiosis. Regulates meiotic recombination and crossover homeostasis by physically dissociating strand invasion events and thereby promotes noncrossover repair by meiotic synthesis dependent strand annealing (SDSA) as well as disassembly of D loop recombination intermediates. Also disassembles T loops and prevents telomere fragility by counteracting telomeric G4-DNA structures, which together ensure the dynamics and stability of the telomere. The chain is Regulator of telomere elongation helicase 1 (Rtel1) from Rattus norvegicus (Rat).